Reading from the N-terminus, the 397-residue chain is Succinyl-diaminopimelate desuccinylase (397 aa).

His73 provides a ligand contact to Zn(2+). Residue Asp75 is part of the active site. Asp106 lines the Zn(2+) pocket. The active-site Proton acceptor is the Glu140. Zn(2+) is bound by residues Glu141, Glu169, and His366.

It belongs to the peptidase M20A family. DapE subfamily. Homodimer. It depends on Zn(2+) as a cofactor. Co(2+) is required as a cofactor.

It carries out the reaction N-succinyl-(2S,6S)-2,6-diaminopimelate + H2O = (2S,6S)-2,6-diaminopimelate + succinate. Its pathway is amino-acid biosynthesis; L-lysine biosynthesis via DAP pathway; LL-2,6-diaminopimelate from (S)-tetrahydrodipicolinate (succinylase route): step 3/3. Functionally, catalyzes the hydrolysis of N-succinyl-L,L-diaminopimelic acid (SDAP), forming succinate and LL-2,6-diaminopimelate (DAP), an intermediate involved in the bacterial biosynthesis of lysine and meso-diaminopimelic acid, an essential component of bacterial cell walls. This chain is Succinyl-diaminopimelate desuccinylase, found in Rhizobium meliloti (strain 1021) (Ensifer meliloti).